A 380-amino-acid chain; its full sequence is Glycogenin-2 (380 aa).

UDP-binding residues include leucine 10, tyrosine 16, and arginine 95. UDP-alpha-D-glucose is bound by residues leucine 10, tyrosine 16, arginine 95, lysine 104, aspartate 120, alanine 121, aspartate 122, asparagine 158, threonine 159, aspartate 185, aspartate 188, and glutamine 189. UDP contacts are provided by aspartate 120, alanine 121, and aspartate 122. Aspartate 120 contacts Mn(2+). Aspartate 122 serves as a coordination point for Mn(2+). 2 O-linked (Glc...) tyrosine glycosylation sites follow: tyrosine 230 and tyrosine 232. Residues histidine 249, glycine 252, and lysine 255 each coordinate UDP. Mn(2+) is bound at residue histidine 249. UDP-alpha-D-glucose is bound by residues glycine 252 and lysine 255. A disordered region spans residues 331–355 (SVDRNASQKSTAEKHDIEKPTSKPQ). A compositionally biased stretch (basic and acidic residues) spans 341 to 351 (TAEKHDIEKPT). O-linked (Glc...) tyrosine glycosylation occurs at tyrosine 367.

The protein belongs to the glycosyltransferase 8 family. Glycogenin subfamily. In terms of assembly, interacts with glycogen synthase GSY2. Mn(2+) is required as a cofactor.

It localises to the cytoplasm. The protein resides in the vacuole. It catalyses the reaction L-tyrosyl-[glycogenin] + UDP-alpha-D-glucose = alpha-D-glucosyl-L-tyrosyl-[glycogenin] + UDP + H(+). The enzyme catalyses [1,4-alpha-D-glucosyl](n)-L-tyrosyl-[glycogenin] + UDP-alpha-D-glucose = [1,4-alpha-D-glucosyl](n+1)-L-tyrosyl-[glycogenin] + UDP + H(+). Its function is as follows. Self-glucosylating initiator of glycogen synthesis. It catalyzes the formation of a short alpha (1,4)-glucosyl chain covalently attached via a glucose 1-O-tyrosyl linkage to internal tyrosine residues and these chains act as primers for the elongation reaction catalyzed by glycogen synthase. Capable of transferring glucosyl residues to unbound acceptors such as free oligoglucans or oligoglucan derivatives. This Saccharomyces cerevisiae (strain ATCC 204508 / S288c) (Baker's yeast) protein is Glycogenin-2.